The sequence spans 671 residues: ABC transporter ATP-binding protein/permease wht-1 (671 aa).

The Cytoplasmic portion of the chain corresponds to 1–408 (MHKAPISTLI…SWLTVIRDPN (408 aa)). The ABC transporter domain maps to 64 to 310 (TNFVDRFRNN…FEKCGYPCPA (247 aa)). Residue 100 to 107 (GSSGAGKT) coordinates ATP. A helical transmembrane segment spans residues 409 to 429 (LLSVRLLQILITAFITGIVFF). Residues 430–451 (QTPVTPATIISINGIMFNHIRN) are Extracellular-facing. A helical membrane pass occupies residues 452–472 (MNFMLQFPNVPVITAELPIVL). Topologically, residues 473–497 (RENANGVYRTSAYFLAKNIAELPQY) are cytoplasmic. The chain crosses the membrane as a helical span at residues 498-518 (IILPILYNTIVYWMSGLYPNF). At 519–525 (WNYCFAS) the chain is on the extracellular side. Residues 526–546 (LVTILITNVAISISYAVATIF) traverse the membrane as a helical segment. Topologically, residues 547 to 550 (ANTD) are cytoplasmic. Residues 551–571 (VAMTILPIFVVPIMAFGGFFI) form a helical membrane-spanning segment. The Extracellular segment spans residues 572–644 (TFDAIPSYFK…DFSASHKIFD (73 aa)). Residues 645-665 (ISILFGMFIGIRIIAYVALLI) traverse the membrane as a helical segment. Residues 666 to 671 (RSYNNT) lie on the Cytoplasmic side of the membrane.

This sequence belongs to the ABC transporter superfamily. ABCG family. Eye pigment precursor importer (TC 3.A.1.204) subfamily. In terms of tissue distribution, expressed in the intestine in both larvae and adults. Expressed in the gut of males.

It localises to the membrane. In terms of biological role, required for efficient RNA interference (RNAi). Plays a role in germline development. This is ABC transporter ATP-binding protein/permease wht-1 from Caenorhabditis elegans.